The primary structure comprises 259 residues: Proteasome subunit alpha (259 aa).

The span at 233–243 (PAAPAAASESA) shows a compositional bias: low complexity. The interval 233 to 259 (PAAPAAASESAPEPKPDTETKPADPQD) is disordered. A compositionally biased stretch (basic and acidic residues) spans 244 to 259 (PEPKPDTETKPADPQD).

It belongs to the peptidase T1A family. In terms of assembly, the 20S proteasome core is composed of 14 alpha and 14 beta subunits that assemble into four stacked heptameric rings, resulting in a barrel-shaped structure. The two inner rings, each composed of seven catalytic beta subunits, are sandwiched by two outer rings, each composed of seven alpha subunits. The catalytic chamber with the active sites is on the inside of the barrel. Has a gated structure, the ends of the cylinder being occluded by the N-termini of the alpha-subunits. Is capped by the proteasome-associated ATPase, ARC.

It is found in the cytoplasm. The protein operates within protein degradation; proteasomal Pup-dependent pathway. The formation of the proteasomal ATPase ARC-20S proteasome complex, likely via the docking of the C-termini of ARC into the intersubunit pockets in the alpha-rings, may trigger opening of the gate for substrate entry. Interconversion between the open-gate and close-gate conformations leads to a dynamic regulation of the 20S proteasome proteolysis activity. Functionally, component of the proteasome core, a large protease complex with broad specificity involved in protein degradation. The polypeptide is Proteasome subunit alpha (Rhodococcus opacus (strain B4)).